We begin with the raw amino-acid sequence, 265 residues long: Gamma-secretase subunit APH-1A (265 aa).

Over 1–2 (MG) the chain is Lumenal. A helical transmembrane segment spans residues 3–23 (AAVFFGCTFVAFGPAFSLFLI). Residues 24-31 (TVAGDPLR) lie on the Cytoplasmic side of the membrane. A helical membrane pass occupies residues 32–52 (VIILVAGAFFWLVSLLLASVV). Residues 53 to 68 (WFILVHVTDRSDARLQ) are Lumenal-facing. A helical membrane pass occupies residues 69 to 89 (YGLLIFGAAVSVLLQEVFRFA). The Cytoplasmic segment spans residues 90 to 118 (YYKLLKKADEGLASLSEDGRSPISIRQMA). Residues 119-139 (YVSGLSFGIISGVFSVINILA) traverse the membrane as a helical segment. Residues 140-158 (DALGPGVVGIHGDSPYYFL) lie on the Lumenal side of the membrane. Residues 159–179 (TSAFLTAAIILLHTFWGVVFF) traverse the membrane as a helical segment. Residues 180–186 (DACERRR) are Cytoplasmic-facing. Residues 187 to 207 (YWALGLVVGSHLLTSGLTFLN) form a helical membrane-spanning segment. The Lumenal portion of the chain corresponds to 208–213 (PWYEAS). A helical membrane pass occupies residues 214–234 (LLPIYAVTVSMGLWAFITAGG). Topologically, residues 235–265 (SLRSIQRSLSCRRQEDSRVMVYSALRIPPED) are cytoplasmic.

Belongs to the APH-1 family. As to quaternary structure, the functional gamma-secretase complex is composed of at least four polypeptides: a presenilin homodimer (PSEN1 or PSEN2), nicastrin (NCSTN), APH1 (APH1A or APH1B) and PSENEN/PEN2.

The protein localises to the endoplasmic reticulum membrane. It is found in the golgi apparatus. Its subcellular location is the golgi stack membrane. Functionally, non-catalytic subunit of the gamma-secretase complex, an endoprotease complex that catalyzes the intramembrane cleavage of integral membrane proteins such as Notch receptors and APP (amyloid-beta precursor protein). Required for normal gamma-secretase assembly. The gamma-secretase complex plays a role in Notch and Wnt signaling cascades and regulation of downstream processes via its role in processing key regulatory proteins, and by regulating cytosolic CTNNB1 levels. This chain is Gamma-secretase subunit APH-1A (Aph1a), found in Mus musculus (Mouse).